Reading from the N-terminus, the 319-residue chain is Tyrosine--tRNA ligase (319 aa).

Residue Tyr40 participates in L-tyrosine binding. The short motif at 45-53 is the 'HIGH' region element; the sequence is PSGRIHMGH. L-tyrosine contacts are provided by Tyr159, Gln163, Asp166, and Gln181. The 'KMSKS' region signature appears at 216–220; sequence KMSSS. Residue Ser219 coordinates ATP.

This sequence belongs to the class-I aminoacyl-tRNA synthetase family. TyrS type 3 subfamily. In terms of assembly, homodimer.

The protein resides in the cytoplasm. The catalysed reaction is tRNA(Tyr) + L-tyrosine + ATP = L-tyrosyl-tRNA(Tyr) + AMP + diphosphate + H(+). Catalyzes the attachment of tyrosine to tRNA(Tyr) in a two-step reaction: tyrosine is first activated by ATP to form Tyr-AMP and then transferred to the acceptor end of tRNA(Tyr). In Methanococcus maripaludis (strain DSM 14266 / JCM 13030 / NBRC 101832 / S2 / LL), this protein is Tyrosine--tRNA ligase.